The primary structure comprises 485 residues: Probable aspartic-type endopeptidase opsB (485 aa).

Residues 1 to 20 (MRHIFSLLSIVCLMVKHGAC) form the signal peptide. Residues 69–397 (YFCNVTLGTP…DIANNEISIA (329 aa)) form the Peptidase A1 domain. Asparagine 72 carries an N-linked (GlcNAc...) asparagine glycan. Residue aspartate 87 is part of the active site. N-linked (GlcNAc...) asparagine glycans are attached at residues asparagine 99, asparagine 107, asparagine 111, and asparagine 132. The active site involves aspartate 285. Asparagine 328, asparagine 337, and asparagine 402 each carry an N-linked (GlcNAc...) asparagine glycan. The GPI-anchor amidated serine moiety is linked to residue serine 461. Positions 462-485 (AGVARADKQYLAIALIAVWFVLGL) are cleaved as a propeptide — removed in mature form.

Belongs to the peptidase A1 family.

It localises to the cell membrane. Probable GPI-anchored aspartic-type endopeptidase which contributes to virulence. In Aspergillus fumigatus (strain ATCC MYA-4609 / CBS 101355 / FGSC A1100 / Af293) (Neosartorya fumigata), this protein is Probable aspartic-type endopeptidase opsB (opsB).